A 528-amino-acid polypeptide reads, in one-letter code: Inorganic phosphate transporter 1-2 (528 aa).

The Cytoplasmic segment spans residues 1–24 (MAGSQLNVLVKLDQAKTQWYHFMA). A helical transmembrane segment spans residues 25–45 (IVIAGMGFFTDAYDLFCIALV). Residues 46-71 (TKLLGRLYYTDITKPNPGTLPPNVSS) are Extracellular-facing. The chain crosses the membrane as a helical span at residues 72-92 (AVTGVALCGTLAGQLFFGWLG). Residues 93–99 (DKLGRKS) lie on the Cytoplasmic side of the membrane. The chain crosses the membrane as a helical span at residues 100–120 (VYGFTLILMVVCSIASGLSFG). The Extracellular portion of the chain corresponds to 121 to 125 (HTPKS). Residues 126–146 (VIATLCFFRFWLGFGIGGDYP) traverse the membrane as a helical segment. At 147–163 (LSATIMSEYASKKTRGA) the chain is on the cytoplasmic side. A helical transmembrane segment spans residues 164–184 (FIAAVFAMQGFGILFGAIVAL). Topologically, residues 185 to 212 (VVSAGFRHAYPAPSYAQNPAASLAPQAD) are extracellular. The helical transmembrane segment at 213–232 (YTWRLILMFGTIPAGLTYYW) threads the bilayer. At 233–296 (RMKMPETARY…RQFMKRHGMH (64 aa)) the chain is on the cytoplasmic side. A helical transmembrane segment spans residues 297–317 (LLATTSTWFLLDIAFYSQNLF). Residues 318 to 348 (QKDIFSKVGWIPPAKTMNALEELYRISRAQA) lie on the Extracellular side of the membrane. The helical transmembrane segment at 349 to 369 (LIALCGTIPGYWFTVAFIDIV) threads the bilayer. Residues 370–371 (GR) lie on the Cytoplasmic side of the membrane. A helical membrane pass occupies residues 372 to 392 (FWIQIMGFFMMTVFMLALGVP). Over 393 to 405 (YDHWTHPAHHTGF) the chain is Extracellular. Residues 406–426 (VVLYALTFFFANFGPNSTTFI) form a helical membrane-spanning segment. The Cytoplasmic segment spans residues 427 to 442 (VPAEIFPARLRSTCHG). A helical membrane pass occupies residues 443–463 (ISAASGKAGAIIGAFGFLYAA). The Extracellular portion of the chain corresponds to 464–481 (QDQHNPDAGYSRGIGIRN). Residues 482-502 (ALFVLAGTNFLGMLMTLLVPE) form a helical membrane-spanning segment. The Cytoplasmic segment spans residues 503-528 (SKGLSLEEMSKDNVVDETAQEAIAQA).

Belongs to the major facilitator superfamily. Phosphate:H(+) symporter (TC 2.A.1.9) family. Expressed in the root stele and leaf phloem and xylem.

Its subcellular location is the membrane. Low-affinity transporter for inorganic phosphate (Pi). Involved in internal Pi transport from root to shoot. Responsible for most of the PHR2-mediated accumulation of excess shoot Pi under abundant Pi conditions, but not for PHO2-mediated accumulation of excess shoot Pi. Acts as a H(+):phosphate symporter. In Oryza sativa subsp. japonica (Rice), this protein is Inorganic phosphate transporter 1-2 (PTH1-2).